A 291-amino-acid chain; its full sequence is E3 ubiquitin-protein ligase RZFP34 (291 aa).

The CHY-type zinc-finger motif lies at 20–96; that stretch reads IGSGHYGCSH…VQQNCSNCGV (77 aa). Residues Cys27, His29, Cys40, Cys41, Cys47, Cys50, His51, His66, Cys78, Cys81, Cys91, Cys94, Cys103, Cys106, His119, Cys120, Cys123, Cys126, His136, Cys137, Cys140, Cys143, His152, and Cys154 each coordinate Zn(2+). A CTCHY-type zinc finger spans residues 98–162; sequence MGKYFCSKCK…QCVEGAMHHN (65 aa). An RING-type; atypical zinc finger spans residues 163–206; the sequence is CPVCFEYLFDSTRDITVLRCGHTMHLECTKDMGLHNRYTCPVCS. The residue at position 173 (Ser173) is a Phosphoserine. Thr178 is modified (phosphothreonine). Ser208 carries the phosphoserine modification. A disordered region spans residues 271–291; sequence QRGSDSHSCSSGMPQVVGSTG.

As to quaternary structure, interacts with SRK2D/2SNRK2.2, SRK2I/SNRK2.3 and SRK2E/SNRK2.6. Phosphorylated at Ser-173, Thr-178 and Ser-208 by SRK2E/SNRK2.6 in response to abscisic acid (ABA). Phosphorylation activates its E3 ubiquitin-protein ligase activity. Expressed in roots, leaves, and anthers and stigma of open flowers.

It localises to the nucleus. It is found in the cytoplasm. The protein resides in the endoplasmic reticulum. The catalysed reaction is S-ubiquitinyl-[E2 ubiquitin-conjugating enzyme]-L-cysteine + [acceptor protein]-L-lysine = [E2 ubiquitin-conjugating enzyme]-L-cysteine + N(6)-ubiquitinyl-[acceptor protein]-L-lysine.. The protein operates within protein modification; protein ubiquitination. Its function is as follows. Possesses E3 ubiquitin-protein ligase activity in vitro. Mediates mainly 'Lys-48'-linked polyubiquitination. Promotes abscisic acid (ABA)-induced stomatal closure, reactive oxygen species (ROS) production and drought tolerance. Involved in the regulation of stomatal aperture. This Arabidopsis thaliana (Mouse-ear cress) protein is E3 ubiquitin-protein ligase RZFP34.